The following is a 1000-amino-acid chain: Putative methyl-accepting chemotaxis protein sll0041 (1000 aa).

Residues 1 to 59 form a disordered region; the sequence is MTQNPSSDRRPDTAQSVANGETLDGALFTGLTDTAAAQDESSETSASFATIDGEDKSEV. GAF domains lie at 342–478 and 509–650; these read EIQG…QTTL and NSEQ…GLAL. One can recognise an HAMP domain in the interval 671–722; sequence EKMQKRALELLMEVDPVSRGDLTIRAHVTEDEIGTIADSYNATIESLRRIVT. One can recognise a Methyl-accepting transducer domain in the interval 727 to 963; it reads AASQFTETTD…SVTQTMALVA (237 aa).

This sequence belongs to the methyl-accepting chemotaxis (MCP) protein family.

The chain is Putative methyl-accepting chemotaxis protein sll0041 from Synechocystis sp. (strain ATCC 27184 / PCC 6803 / Kazusa).